The primary structure comprises 346 residues: N-acetyl-gamma-glutamyl-phosphate reductase (346 aa).

Residue cysteine 154 is part of the active site.

This sequence belongs to the NAGSA dehydrogenase family. Type 1 subfamily.

Its subcellular location is the cytoplasm. The catalysed reaction is N-acetyl-L-glutamate 5-semialdehyde + phosphate + NADP(+) = N-acetyl-L-glutamyl 5-phosphate + NADPH + H(+). It participates in amino-acid biosynthesis; L-arginine biosynthesis; N(2)-acetyl-L-ornithine from L-glutamate: step 3/4. In terms of biological role, catalyzes the NADPH-dependent reduction of N-acetyl-5-glutamyl phosphate to yield N-acetyl-L-glutamate 5-semialdehyde. This is N-acetyl-gamma-glutamyl-phosphate reductase from Rhodopirellula baltica (strain DSM 10527 / NCIMB 13988 / SH1).